A 134-amino-acid polypeptide reads, in one-letter code: Holo-[acyl-carrier-protein] synthase (134 aa).

2 residues coordinate Mg(2+): Asp-8 and Glu-57.

It belongs to the P-Pant transferase superfamily. AcpS family. It depends on Mg(2+) as a cofactor.

Its subcellular location is the cytoplasm. It carries out the reaction apo-[ACP] + CoA = holo-[ACP] + adenosine 3',5'-bisphosphate + H(+). Transfers the 4'-phosphopantetheine moiety from coenzyme A to a Ser of acyl-carrier-protein. In Rhizobium leguminosarum bv. trifolii (strain WSM2304), this protein is Holo-[acyl-carrier-protein] synthase.